The chain runs to 481 residues: Extracellular exo-alpha-(1-&gt;5)-L-arabinofuranosidase (481 aa).

Residues 1-27 (MRRLTVRLFTAVLAALALLTMGTPAHA) form the signal peptide. A catalytic region spans residues 37–336 (FTNPLAEKRA…KVYWNADGTP (300 aa)). The active-site Proton acceptor is the D47. A substrate-binding site is contributed by N186. E223 functions as the Proton donor in the catalytic mechanism. Substrate is bound by residues H287, R321, 363–366 (HWDF), D379, 457–460 (HYEN), and D475. An ABD region spans residues 349-479 (VRFSSYNYPD…ALDRQDATFY (131 aa)).

Belongs to the glycosyl hydrolase 43 family.

It localises to the secreted. The enzyme catalyses Hydrolysis of terminal non-reducing alpha-L-arabinofuranoside residues in alpha-L-arabinosides.. It participates in glycan metabolism; L-arabinan degradation. Its function is as follows. Involved in the degradation of arabinan and is a key enzyme in the complete degradation of the plant cell wall. Catalyzes only the cleavage of terminal alpha-(1-&gt;5) arabinofuranosyl bonds of arabinan present in the arabinofuranosyl polysaccharides or oligosaccharides. It cannot act on other arabinose-containing polysaccharides and arabinoxylo-oligosaccharides. This Streptomyces avermitilis (strain ATCC 31267 / DSM 46492 / JCM 5070 / NBRC 14893 / NCIMB 12804 / NRRL 8165 / MA-4680) protein is Extracellular exo-alpha-(1-&gt;5)-L-arabinofuranosidase.